Reading from the N-terminus, the 39-residue chain is Contryphan-Cal3 (39 aa).

The N-terminal stretch at 1-20 (MTRTAVLLLTLLFLVAMAAS) is a signal peptide. The cysteines at positions 29 and 35 are disulfide-linked.

Expressed by the venom duct.

Its subcellular location is the secreted. In terms of biological role, probable neurotoxin. The sequence is that of Contryphan-Cal3 from Californiconus californicus (California cone).